A 1365-amino-acid polypeptide reads, in one-letter code: DNA-directed RNA polymerase subunit beta' (1365 aa).

Positions 249, 316, 323, and 326 each coordinate Zn(2+).

The protein belongs to the RNA polymerase beta' chain family. RpoC2 subfamily. In terms of assembly, in cyanobacteria the RNAP catalytic core is composed of 2 alpha, 1 beta, 1 beta', 1 gamma and 1 omega subunit. When a sigma factor is associated with the core the holoenzyme is formed, which can initiate transcription. The cofactor is Zn(2+).

The catalysed reaction is RNA(n) + a ribonucleoside 5'-triphosphate = RNA(n+1) + diphosphate. DNA-dependent RNA polymerase catalyzes the transcription of DNA into RNA using the four ribonucleoside triphosphates as substrates. This chain is DNA-directed RNA polymerase subunit beta', found in Synechococcus sp. (strain CC9311).